Here is a 193-residue protein sequence, read N- to C-terminus: NAD(P)H-quinone oxidoreductase subunit I (193 aa).

4Fe-4S ferredoxin-type domains are found at residues 55–84 and 95–124; these read GRIH…VDWE and KHYS…VTEE. 8 residues coordinate [4Fe-4S] cluster: C64, C67, C70, C74, C104, C107, C110, and C114.

The protein belongs to the complex I 23 kDa subunit family. NDH-1 is composed of at least 11 different subunits. [4Fe-4S] cluster is required as a cofactor.

The protein localises to the cellular thylakoid membrane. It catalyses the reaction a plastoquinone + NADH + (n+1) H(+)(in) = a plastoquinol + NAD(+) + n H(+)(out). The enzyme catalyses a plastoquinone + NADPH + (n+1) H(+)(in) = a plastoquinol + NADP(+) + n H(+)(out). NDH-1 shuttles electrons from an unknown electron donor, via FMN and iron-sulfur (Fe-S) centers, to quinones in the respiratory and/or the photosynthetic chain. The immediate electron acceptor for the enzyme in this species is believed to be plastoquinone. Couples the redox reaction to proton translocation, and thus conserves the redox energy in a proton gradient. The sequence is that of NAD(P)H-quinone oxidoreductase subunit I from Cyanothece sp. (strain PCC 7425 / ATCC 29141).